The primary structure comprises 134 residues: Large ribosomal subunit protein uL22 (134 aa).

It belongs to the universal ribosomal protein uL22 family. In terms of assembly, part of the 50S ribosomal subunit.

In terms of biological role, this protein binds specifically to 23S rRNA; its binding is stimulated by other ribosomal proteins, e.g. L4, L17, and L20. It is important during the early stages of 50S assembly. It makes multiple contacts with different domains of the 23S rRNA in the assembled 50S subunit and ribosome. The globular domain of the protein is located near the polypeptide exit tunnel on the outside of the subunit, while an extended beta-hairpin is found that lines the wall of the exit tunnel in the center of the 70S ribosome. In Porphyromonas gingivalis (strain ATCC 33277 / DSM 20709 / CIP 103683 / JCM 12257 / NCTC 11834 / 2561), this protein is Large ribosomal subunit protein uL22.